The primary structure comprises 256 residues: GDSL esterase/lipase CPRD49 (256 aa).

The N-terminal stretch at 1-27 is a signal peptide; that stretch reads MVGPARPQIVLFGSSIVQMSFGHGGWG. The active-site Nucleophile is the serine 15. N-linked (GlcNAc...) asparagine glycosylation is found at asparagine 49 and asparagine 79. Residue histidine 213 is part of the active site. An N-linked (GlcNAc...) asparagine glycan is attached at asparagine 243.

The protein belongs to the 'GDSL' lipolytic enzyme family. As to expression, specifically expressed in anthers (stages 8-12).

It localises to the secreted. This Arabidopsis thaliana (Mouse-ear cress) protein is GDSL esterase/lipase CPRD49 (CPRD49).